A 137-amino-acid chain; its full sequence is Nucleoside diphosphate kinase (137 aa).

Residues lysine 9, phenylalanine 57, arginine 85, threonine 91, arginine 102, and asparagine 112 each contribute to the ATP site. The active-site Pros-phosphohistidine intermediate is histidine 115.

Belongs to the NDK family. Homotetramer. The cofactor is Mg(2+).

It is found in the cytoplasm. It carries out the reaction a 2'-deoxyribonucleoside 5'-diphosphate + ATP = a 2'-deoxyribonucleoside 5'-triphosphate + ADP. The enzyme catalyses a ribonucleoside 5'-diphosphate + ATP = a ribonucleoside 5'-triphosphate + ADP. Major role in the synthesis of nucleoside triphosphates other than ATP. The ATP gamma phosphate is transferred to the NDP beta phosphate via a ping-pong mechanism, using a phosphorylated active-site intermediate. This is Nucleoside diphosphate kinase from Geotalea uraniireducens (strain Rf4) (Geobacter uraniireducens).